The chain runs to 492 residues: 5-taurinomethyluridine-[tRNA] synthase subunit GTPB3, mitochondrial (492 aa).

Residues 1–20 (MWRGLSALVTRPASAPLRLC) constitute a mitochondrion transit peptide. Residues Arg-52, Glu-112, and Lys-152 each coordinate 5,10-methylenetetrahydrofolate. In terms of domain architecture, TrmE-type G spans 249-416 (GANVVVAGPP…LLQALKTELA (168 aa)). Residues 256 to 263 (GPPNAGKS), 282 to 286 (GTTRD), 303 to 306 (DTAG), and 374 to 377 (NKSD) each bind GTP. Asn-259 is a binding site for K(+). Residues Ser-263 and Thr-284 each coordinate Mg(2+). Residue Lys-492 participates in 5,10-methylenetetrahydrofolate binding.

This sequence belongs to the TRAFAC class TrmE-Era-EngA-EngB-Septin-like GTPase superfamily. TrmE GTPase family. Homodimer; forms a dimer in the presence of potassium. Interacts with MTO1; forms the GTPBP3-MTO1 complex composed of homodimers of GTPBP3 and MTO1. It depends on K(+) as a cofactor.

The protein resides in the mitochondrion. The enzyme catalyses GTP + H2O = GDP + phosphate + H(+). In terms of biological role, GTPase component of the GTPBP3-MTO1 complex that catalyzes the 5-taurinomethyluridine (taum(5)U) modification at the 34th wobble position (U34) of mitochondrial tRNAs (mt-tRNAs), which plays a role in mt-tRNA decoding and mitochondrial translation. Taum(5)U formation on mammalian mt-tRNA requires the presence of both GTPBP3-mediated GTPase activity and MTO1 catalytic activity. The sequence is that of 5-taurinomethyluridine-[tRNA] synthase subunit GTPB3, mitochondrial from Rattus norvegicus (Rat).